The primary structure comprises 345 residues: NADPH dehydrogenase (345 aa).

Residue serine 23–cysteine 26 coordinates FMN. Position 28 (tyrosine 28) interacts with substrate. FMN-binding residues include alanine 60 and glutamine 102. Histidine 164–histidine 167 contacts substrate. Residues arginine 215 and glycine 307–arginine 308 contribute to the FMN site.

The protein belongs to the NADH:flavin oxidoreductase/NADH oxidase family. NamA subfamily. In terms of assembly, homotetramer. It depends on FMN as a cofactor.

It carries out the reaction A + NADPH + H(+) = AH2 + NADP(+). Its function is as follows. Catalyzes the reduction of the double bond of an array of alpha,beta-unsaturated aldehydes and ketones. It also reduces the nitro group of nitroester and nitroaromatic compounds. It could have a role in detoxification processes. This chain is NADPH dehydrogenase, found in Bacillus cereus (strain ATCC 14579 / DSM 31 / CCUG 7414 / JCM 2152 / NBRC 15305 / NCIMB 9373 / NCTC 2599 / NRRL B-3711).